The primary structure comprises 268 residues: Small ribosomal subunit protein uS3 (268 aa).

Residues 40-110 (IRNLFFINYR…KLDLTINEIG (71 aa)) enclose the KH type-2 domain.

It belongs to the universal ribosomal protein uS3 family. Part of the 30S ribosomal subunit. Forms a tight complex with proteins S10 and S14.

Binds the lower part of the 30S subunit head. Binds mRNA in the 70S ribosome, positioning it for translation. The protein is Small ribosomal subunit protein uS3 of Mycoplasma genitalium (strain ATCC 33530 / DSM 19775 / NCTC 10195 / G37) (Mycoplasmoides genitalium).